A 101-amino-acid chain; its full sequence is Small ribosomal subunit protein uS14 (101 aa).

The protein belongs to the universal ribosomal protein uS14 family. In terms of assembly, part of the 30S ribosomal subunit. Contacts proteins S3 and S10.

Its function is as follows. Binds 16S rRNA, required for the assembly of 30S particles and may also be responsible for determining the conformation of the 16S rRNA at the A site. This is Small ribosomal subunit protein uS14 from Acinetobacter baumannii (strain SDF).